A 400-amino-acid polypeptide reads, in one-letter code: Endoplasmin (400 aa).

Position 1 is an N6-succinyllysine (Lys-1). The N-linked (GlcNAc...) asparagine glycan is linked to Asn-42. Phosphoserine is present on Ser-44. Position 76 is an N6-acetyllysine (Lys-76). Residues Asn-78 and Asn-99 are each glycosylated (N-linked (GlcNAc...) asparagine). Lys-230 bears the N6-succinyllysine mark. The disordered stretch occupies residues 346–400; that stretch reads IDPEAQVEEEPEEEPEDTTEDTEQDEEEEVDAGTEEEEEEEQETAKESTAEKDEL. A compositionally biased stretch (acidic residues) spans 350-387; it reads AQVEEEPEEEPEDTTEDTEQDEEEEVDAGTEEEEEEEQ. Thr-379 is subject to Phosphothreonine. Residues 388–400 are compositionally biased toward basic and acidic residues; sequence ETAKESTAEKDEL. The Prevents secretion from ER motif lies at 397–400; that stretch reads KDEL.

This sequence belongs to the heat shock protein 90 family. In terms of assembly, homodimer; disulfide-linked. Component of an EIF2 complex at least composed of CELF1/CUGBP1, CALR, CALR3, EIF2S1, EIF2S2, HSP90B1 and HSPA5. Part of a large chaperone multiprotein complex comprising DNAJB11, HSP90B1, HSPA5, HYOU, PDIA2, PDIA4, PDIA6, PPIB, SDF2L1, UGGT1 and very small amounts of ERP29, but not, or at very low levels, CALR nor CANX. Interacts with AIMP1; regulates its retention in the endoplasmic reticulum. Hyperglycosylated form interacts with OS9; promoting its degradation by the endoplasmic reticulum associated degradation (ERAD). Interacts with CNPY3. This interaction is disrupted in the presence of ATP. Interacts with TLR4 and TLR9, but not with TLR3. Interacts with MZB1 in a calcium-dependent manner. Interacts with METTL23. Interacts with IL1B; the interaction facilitates cargo translocation into the ERGIC. Interacts with EIF2AK3. Phosphorylated by CK2. Post-translationally, N-glycosylated cotranslationally at Asn-217 by STT3A-containing OST-A complex: this glycosylation is constitutive. In response to various stress, 5 additional facultative sites (Asn-62, Asn-107, Asn-445, Asn-481 and Asn-502) can be glycosylated post-translationally by STT3B-containing OST-B complex, leading to a hyperglycosylated form that is degraded by the ER-associated degradation (ERAD) pathway. In normal conditions, the OST-A complex together with CCDC134 prevent glycosylation at facultative sites during protein folding, thereby preventing hyperglycosylation. Mechanistically, nascent HSP90B1 is tethered during translation to a specialized CCDC134-containing translocon that forms a microenvironment for its folding, in which STT3A associates with the SRT pseudosubstrate motif, and prevents access to facultative glycosylation sites until folding is completed, rendering its facultative sites inaccessible to the OST-B complex.

It localises to the endoplasmic reticulum lumen. The protein localises to the sarcoplasmic reticulum lumen. It is found in the melanosome. It catalyses the reaction ATP + H2O = ADP + phosphate + H(+). Functionally, ATP-dependent chaperone involved in the processing of proteins in the endoplasmic reticulum, regulating their transport. Together with MESD, acts as a modulator of the Wnt pathway by promoting the folding of LRP6, a coreceptor of the canonical Wnt pathway. When associated with CNPY3, required for proper folding of Toll-like receptors. Promotes folding and trafficking of TLR4 to the cell surface. May participate in the unfolding of cytosolic leaderless cargos (lacking the secretion signal sequence) such as the interleukin 1/IL-1 to facilitate their translocation into the ERGIC (endoplasmic reticulum-Golgi intermediate compartment) and secretion; the translocation process is mediated by the cargo receptor TMED10. The sequence is that of Endoplasmin (HSP90B1) from Mesocricetus auratus (Golden hamster).